The chain runs to 274 residues: tRNA uridine(34) hydroxylase (274 aa).

The region spanning 121–217 is the Rhodanese domain; the sequence is SRSDVYTIDT…YFKSTKNTNN (97 aa). The active-site Cysteine persulfide intermediate is the Cys-177.

It belongs to the TrhO family.

The enzyme catalyses uridine(34) in tRNA + AH2 + O2 = 5-hydroxyuridine(34) in tRNA + A + H2O. In terms of biological role, catalyzes oxygen-dependent 5-hydroxyuridine (ho5U) modification at position 34 in tRNAs. This is tRNA uridine(34) hydroxylase from Ehrlichia canis (strain Jake).